The primary structure comprises 515 residues: Tyrosine decarboxylase 1 (515 aa).

Repeat copies occupy residues 81 to 138 and 141 to 192. The 2 X approximate tandem repeats stretch occupies residues 81–192; the sequence is DDITNHIVPG…KVLNKIGKDQ (112 aa). Ala105 lines the substrate pocket. 2 residues coordinate pyridoxal 5'-phosphate: Thr169 and Cys170. A substrate-binding site is contributed by His205. Pyridoxal 5'-phosphate-binding residues include Thr264 and Asn318. Lys321 carries the post-translational modification N6-(pyridoxal phosphate)lysine.

Belongs to the group II decarboxylase family. Pyridoxal 5'-phosphate is required as a cofactor. In terms of tissue distribution, mostly expressed in bulbs, and, to a lower extent, in stems, roots, leaves and flowers.

The enzyme catalyses L-tyrosine + H(+) = tyramine + CO2. It functions in the pathway alkaloid biosynthesis. In terms of biological role, catalyzes the decarboxylation of L-tyrosine to tyramine, which is converted to norbelladine, a precursor to all Amaryllidaceae alkaloids such as galanthamine, lycorine and haemanthamine, and including haemanthamine- and crinamine-type alkaloids, promising anticancer agents. The protein is Tyrosine decarboxylase 1 of Narcissus pseudonarcissus (Daffodil).